Consider the following 318-residue polypeptide: NADH-ubiquinone oxidoreductase chain 1 (318 aa).

The next 8 membrane-spanning stretches (helical) occupy residues 2 to 22 (FLMN…FLTL), 70 to 90 (MFIL…IPMP), 100 to 120 (LGVL…LWSG), 136 to 156 (VAQT…IMML), 171 to 191 (HLWL…STLA), 231 to 251 (IIMM…NPLF), 253 to 273 (ELFT…FLWV), and 294 to 314 (LPLT…LAGI).

Belongs to the complex I subunit 1 family.

Its subcellular location is the mitochondrion inner membrane. It carries out the reaction a ubiquinone + NADH + 5 H(+)(in) = a ubiquinol + NAD(+) + 4 H(+)(out). Its function is as follows. Core subunit of the mitochondrial membrane respiratory chain NADH dehydrogenase (Complex I) that is believed to belong to the minimal assembly required for catalysis. Complex I functions in the transfer of electrons from NADH to the respiratory chain. The immediate electron acceptor for the enzyme is believed to be ubiquinone. In Priodontes maximus (Giant armadillo), this protein is NADH-ubiquinone oxidoreductase chain 1 (MT-ND1).